Here is a 357-residue protein sequence, read N- to C-terminus: RNA 3'-terminal phosphate cyclase (357 aa).

Residues Gln-102 and 293-296 (HMGD) each bind ATP. The Tele-AMP-histidine intermediate role is filled by His-319.

The protein belongs to the RNA 3'-terminal cyclase family. Type 1 subfamily.

The protein localises to the cytoplasm. The catalysed reaction is a 3'-end 3'-phospho-ribonucleotide-RNA + ATP = a 3'-end 2',3'-cyclophospho-ribonucleotide-RNA + AMP + diphosphate. Catalyzes the conversion of 3'-phosphate to a 2',3'-cyclic phosphodiester at the end of RNA. The mechanism of action of the enzyme occurs in 3 steps: (A) adenylation of the enzyme by ATP; (B) transfer of adenylate to an RNA-N3'P to produce RNA-N3'PP5'A; (C) and attack of the adjacent 2'-hydroxyl on the 3'-phosphorus in the diester linkage to produce the cyclic end product. The biological role of this enzyme is unknown but it is likely to function in some aspects of cellular RNA processing. The protein is RNA 3'-terminal phosphate cyclase of Desulfurococcus amylolyticus (strain DSM 18924 / JCM 16383 / VKM B-2413 / 1221n) (Desulfurococcus kamchatkensis).